Consider the following 188-residue polypeptide: Large ribosomal subunit protein eL18 (188 aa).

Lys-119 is covalently cross-linked (Glycyl lysine isopeptide (Lys-Gly) (interchain with G-Cter in SUMO2)). A Phosphoserine modification is found at Ser-130. Residues 150–188 are disordered; the sequence is RHFGKAPGTPHSHTKPYVRSKGRKFERARGRRASRGYKN. Thr-158 is modified (phosphothreonine). Basic residues-rich tracts occupy residues 161 to 171 and 178 to 188; these read SHTKPYVRSKG and RGRRASRGYKN. Lys-164 participates in a covalent cross-link: Glycyl lysine isopeptide (Lys-Gly) (interchain with G-Cter in SUMO2).

Belongs to the eukaryotic ribosomal protein eL18 family. In terms of assembly, component of the large ribosomal subunit.

The protein resides in the cytoplasm. It localises to the cytosol. The protein localises to the rough endoplasmic reticulum. Component of the large ribosomal subunit. The ribosome is a large ribonucleoprotein complex responsible for the synthesis of proteins in the cell. This chain is Large ribosomal subunit protein eL18 (Rpl18), found in Rattus norvegicus (Rat).